We begin with the raw amino-acid sequence, 382 residues long: Pyrimidine monooxygenase RutA (382 aa).

FMN contacts are provided by residues 68–69 (IK), Asn-134, Glu-143, 159–160 (RY), and Ser-209.

The protein belongs to the NtaA/SnaA/DszA monooxygenase family. RutA subfamily.

It carries out the reaction uracil + FMNH2 + NADH + O2 = (Z)-3-ureidoacrylate + FMN + NAD(+) + H2O + H(+). The enzyme catalyses thymine + FMNH2 + NADH + O2 = (Z)-2-methylureidoacrylate + FMN + NAD(+) + H2O + H(+). Functionally, catalyzes the pyrimidine ring opening between N-3 and C-4 by an unusual flavin hydroperoxide-catalyzed mechanism, adding oxygen atoms in the process to yield ureidoacrylate peracid, that immediately reacts with FMN forming ureidoacrylate and FMN-N(5)-oxide. The FMN-N(5)-oxide reacts spontaneously with NADH to produce FMN. Requires the flavin reductase RutF to regenerate FMN in vivo. The polypeptide is Pyrimidine monooxygenase RutA (Escherichia coli (strain B / BL21-DE3)).